The following is a 580-amino-acid chain: Alpha-thujene synthase, chloroplastic (580 aa).

The N-terminal 32 residues, 1 to 32 (MALQLLTPSFSFQHSPSPHKLTTLRYTHHRIR), are a transit peptide targeting the chloroplast. Residues arginine 296, aspartate 333, aspartate 337, arginine 473, and aspartate 476 each coordinate (2E)-geranyl diphosphate. Mg(2+) contacts are provided by aspartate 333 and aspartate 337. Residues 333–337 (DDVYD) carry the DDXXD motif motif. The Mg(2+) site is built by aspartate 476, threonine 480, and glutamate 484.

The protein belongs to the terpene synthase family. Tpsb subfamily. Monomer. It depends on Mg(2+) as a cofactor. Requires Mn(2+) as cofactor. As to expression, expressed in developing and mature fruits. Barely detectable in leaves and shoots.

Its subcellular location is the plastid. It is found in the chloroplast. It catalyses the reaction (2E)-geranyl diphosphate = alpha-thujene + diphosphate. Its pathway is secondary metabolite biosynthesis; terpenoid biosynthesis. In terms of biological role, monoterpene synthase (TPS) involved in the biosynthesis of monoterpene natural products used by traditional Chinese medicine to treat headache, inflammation and intoxication. Catalyzes the conversion of (2E)-geranyl diphosphate (GPP) into alpha-thujene. This chain is Alpha-thujene synthase, chloroplastic, found in Litsea cubeba (Aromatic litsea).